The chain runs to 262 residues: E3 ubiquitin-protein ligase NEURL3 (262 aa).

The NHR domain occupies 17–173; it reads ALRFHAEAKG…TTKAIELLDP (157 aa). The RING-type zinc-finger motif lies at 202–241; it reads CAICFYHAANTRLVPCGHTYFCRYCAWRVFSDTAKCPVCR.

As to quaternary structure, (Microbial infection) Interacts with hepatitis C virus protein E1; this interaction prevents E1 interaction with E2 and subsequently inhibits viral infection.

It localises to the cytoplasm. The enzyme catalyses S-ubiquitinyl-[E2 ubiquitin-conjugating enzyme]-L-cysteine + [acceptor protein]-L-lysine = [E2 ubiquitin-conjugating enzyme]-L-cysteine + N(6)-ubiquitinyl-[acceptor protein]-L-lysine.. Its pathway is protein modification; protein ubiquitination. E3 ubiquitin-protein ligase that plays a role in various biological processes such as lung development or innate immunity. Seems to utilize UBE2E1. Promotes innate antiviral response by catalyzing 'Lys-63'-linked ubiquitination of IRF7. Also inhibits hepatitis C virus assembly by directly binding to viral E1 envelope glycoprotein to disrupt its interaction with E2. Plays an essential role in TLR4-mediated activation of MAPK pathways by promoting 'Lys-48'-linked polyubiquitination of the phosphatase DUSP1/MKP1. The polypeptide is E3 ubiquitin-protein ligase NEURL3 (NEURL3) (Homo sapiens (Human)).